The sequence spans 238 residues: Dolichyldiphosphatase 1 (238 aa).

A run of 4 helical transmembrane segments spans residues 33-53 (LAYLSLSPVVIIVGFVTLIIF), 100-120 (PSSHSQFMWFFSVYSFLFLYL), 130-150 (FLDLLWRHVLSLGLLTAAFLV), and 162-182 (WSQVLYGGVAGSLMAIAWFAF).

This sequence belongs to the dolichyldiphosphatase family.

It localises to the endoplasmic reticulum membrane. The catalysed reaction is a di-trans,poly-cis-dolichyl diphosphate + H2O = a di-trans,poly-cis-dolichyl phosphate + phosphate + H(+). Its pathway is protein modification; protein glycosylation. Required for efficient N-glycosylation. Necessary for maintaining optimal levels of dolichol-linked oligosaccharides. Hydrolyzes dolichyl pyrophosphate at a very high rate and dolichyl monophosphate at a much lower rate. Does not act on phosphatidate. This chain is Dolichyldiphosphatase 1 (DOLPP1), found in Rhinolophus ferrumequinum (Greater horseshoe bat).